We begin with the raw amino-acid sequence, 2839 residues long: PDZ domain-containing protein 2 (2839 aa).

The PDZ 1 domain occupies 85-182 (LSFGNIPVFG…LIMLRRFKHK (98 aa)). A disordered region spans residues 185–318 (STYNGNSSNS…RFSKGGKTDF (134 aa)). A compositionally biased stretch (low complexity) spans 189–202 (GNSSNSSEPGETPT). A compositionally biased stretch (basic and acidic residues) spans 280–296 (HLERSEVDRGTEHRIPK). The PDZ 2 domain maps to 334 to 419 (KMELLKESDG…MVQLVVASKE (86 aa)). Positions 437–447 (TSSVEDVSSWT) are enriched in polar residues. Residues 437-501 (TSSVEDVSSW…PKQGSNKIKL (65 aa)) form a disordered region. The span at 448 to 461 (DNEDQEADGEEDEG) shows a compositional bias: acidic residues. Ser-568 carries the phosphoserine modification. One can recognise a PDZ 3 domain in the interval 586-672 (IIGLYKEKGK…GLFVLTVRTK (87 aa)). A compositionally biased stretch (polar residues) spans 678-697 (LTPCSTPTHMSRSASPNFNT). Residues 678–723 (LTPCSTPTHMSRSASPNFNTSGGASAGGSDEGSSSSLGRKTPGPKD) form a disordered region. The PDZ 4 domain maps to 728 to 813 (EVTLNKEPRV…GPVRLVIGRH (86 aa)). 2 stretches are compositionally biased toward polar residues: residues 832–843 (YQESKEANSSPG) and 894–908 (GCST…PSTS). Disordered stretches follow at residues 832–852 (YQES…KSPS) and 879–921 (DFMV…ANSL). Phosphoserine is present on residues Ser-944 and Ser-948. Disordered regions lie at residues 984–1033 (SLPG…ISAP), 1062–1155 (SAEA…PCDL), 1216–1493 (KAAS…GAPA), 1530–1620 (FHED…LPTQ), 1638–1712 (PRES…SPLS), 1809–1865 (NQGT…DLSK), 1892–1976 (GKAK…SVSD), 2009–2079 (PDRG…GNIM), 2135–2166 (QVAE…SMAK), 2178–2211 (IRKA…GEDH), 2232–2251 (HFGR…DSQV), 2353–2383 (AKSG…GSLG), 2426–2481 (SRQN…SRSK), and 2516–2564 (ITPR…GEAA). A compositionally biased stretch (basic and acidic residues) spans 1012–1022 (MDVHNQEERPR). Polar residues-rich tracts occupy residues 1092-1111 (RTDT…QQKS), 1138-1147 (SGSQTVNLTG), 1221-1236 (LGQQ…SDLI), 1250-1269 (SKTS…SQPA), 1305-1315 (TRSASETSTPH), 1384-1401 (SVSS…PSTD), and 1440-1453 (RSPS…GSQE). Over residues 1662-1672 (SSQPSSLLEMS) the composition is skewed to low complexity. A compositionally biased stretch (polar residues) spans 1698 to 1711 (EVTSASSAMENSPL). Ser-1850 is subject to Phosphoserine. Positions 1919 to 1931 (SPQTSHKTLSKAV) are enriched in polar residues. Residues 1936 to 1945 (HVADHEDPDR) are compositionally biased toward basic and acidic residues. Residues 2139 to 2152 (SSTSHPSSLPSHAS) show a composition bias toward low complexity. The segment covering 2370 to 2383 (GRRSSGSIVSGSLG) has biased composition (low complexity). Composition is skewed to polar residues over residues 2426 to 2437 (SRQNPPETSSKG), 2470 to 2480 (RHTQPSPVSRS), and 2546 to 2559 (PKTS…SASD). Residues 2622–2706 (FIVLNRKEGS…HKDALVVIKK (85 aa)) enclose the PDZ 5 domain. Residues 2709-2729 (DQPRPSARQEPPTANGKGLLS) are disordered. The PDZ 6 domain maps to 2750–2835 (CVEVLKTSAG…GPVQLLIRKH (86 aa)).

Interacts with SCN10A, CTNND2 and PKP4. In terms of processing, a secreted form is produced by caspase-mediated proteolytic cleavage. As to expression, isoform 2 is expressed (at protein level) in prostate and many prostate tumors.

It is found in the nucleus. Its subcellular location is the cytoplasm. The protein resides in the endoplasmic reticulum. It localises to the secreted. The polypeptide is PDZ domain-containing protein 2 (PDZD2) (Homo sapiens (Human)).